The following is a 267-amino-acid chain: uncharacterized protein (267 aa).

Belongs to the glycosyltransferase 2 family.

This is an uncharacterized protein from Haemophilus influenzae (strain ATCC 51907 / DSM 11121 / KW20 / Rd).